A 327-amino-acid polypeptide reads, in one-letter code: Zinc transport protein ZntB (327 aa).

Over 1–273 (MEAIKGSDVN…ARRTYTMSLM (273 aa)) the chain is Cytoplasmic. Residues 274-294 (AMVFLPSTFLTGLFGVNLGGI) traverse the membrane as a helical segment. Over 295–300 (PGGGWR) the chain is Periplasmic. Residues 301-321 (FGFSLFCILLVVLIGGVTLWL) form a helical membrane-spanning segment. The Cytoplasmic portion of the chain corresponds to 322–327 (HRSKWL).

The protein belongs to the CorA metal ion transporter (MIT) (TC 1.A.35) family.

The protein resides in the cell inner membrane. The catalysed reaction is Zn(2+)(out) + H(+)(out) = Zn(2+)(in) + H(+)(in). In terms of biological role, zinc transporter. Acts as a Zn(2+):proton symporter, which likely mediates zinc ion uptake. This chain is Zinc transport protein ZntB, found in Salmonella enteritidis PT4 (strain P125109).